The primary structure comprises 254 residues: Phosphoglycerate mutase 1 (254 aa).

Residues 10–17 and 23–24 contribute to the substrate site; these read RHGESTWN and SG. H11 serves as the catalytic Tele-phosphohistidine intermediate. Phosphoserine is present on residues S14 and S23. Y26 carries the post-translational modification Phosphotyrosine. S31 is modified (phosphoserine). Residues R62, 89–92, and K100 contribute to the substrate site; that span reads ERHY. Catalysis depends on E89, which acts as the Proton donor/acceptor. The residue at position 106 (K106) is an N6-acetyllysine. A substrate-binding site is contributed by 116–117; the sequence is RR. S118 is modified (phosphoserine). 187–188 serves as a coordination point for substrate; it reads GN. K251 bears the N6-acetyllysine; alternate mark. At K251 the chain carries N6-succinyllysine; alternate. N6-acetyllysine is present on residues K253 and K254.

Belongs to the phosphoglycerate mutase family. BPG-dependent PGAM subfamily. In terms of assembly, homodimer. Acetylated at Lys-253, Lys-253 and Lys-254 under high glucose condition. Acetylation increases catalytic activity. Under glucose restriction SIRT1 levels dramatically increase and it deacetylates the enzyme.

It catalyses the reaction (2R)-2-phosphoglycerate = (2R)-3-phosphoglycerate. The catalysed reaction is (2R)-3-phospho-glyceroyl phosphate = (2R)-2,3-bisphosphoglycerate + H(+). In terms of biological role, catalyzes the interconversion of 2-phosphoglycerate and 3-phosphoglyceratea crucial step in glycolysis, by using 2,3-bisphosphoglycerate. Also catalyzes the interconversion of (2R)-2,3-bisphosphoglycerate and (2R)-3-phospho-glyceroyl phosphate. This is Phosphoglycerate mutase 1 from Bos taurus (Bovine).